A 293-amino-acid chain; its full sequence is Cytidine deaminase (293 aa).

2 consecutive CMP/dCMP-type deaminase domains span residues 47-166 (EDRA…FGPA) and 186-293 (ESED…YQAV). A substrate-binding site is contributed by 88–90 (NME). His-101 contacts Zn(2+). Glu-103 functions as the Proton donor in the catalytic mechanism. Residues Cys-128 and Cys-131 each coordinate Zn(2+).

It belongs to the cytidine and deoxycytidylate deaminase family. Homodimer. It depends on Zn(2+) as a cofactor.

It catalyses the reaction cytidine + H2O + H(+) = uridine + NH4(+). The catalysed reaction is 2'-deoxycytidine + H2O + H(+) = 2'-deoxyuridine + NH4(+). Its function is as follows. This enzyme scavenges exogenous and endogenous cytidine and 2'-deoxycytidine for UMP synthesis. The polypeptide is Cytidine deaminase (Aeromonas salmonicida (strain A449)).